The chain runs to 429 residues: MKVLVIGNGGREHALAWKAAQSPLVETVFVAPGNAGTALEPALQNVAIGVTDIPALLDFAQNEKIDLTIVGPEAPLVKGVVDTFRAAGLKIFGPTAGAAQLEGSKAFTKDFLARHKIPTAEYQNFTEVEPALAYLREKGAPIVIKADGLAAGKGVIVAMTLEEAEAAVHDMLAGNAFGDAGHRIVIEEFLDGEEASFIVMVDGEHVLPMATSQDHKRVGDKDTGPNTGGMGAYSPAPVVTDDVHQRTMERIIWPTVKGMAAEGNTYTGFLYAGLMIDKQGNPKVIEFNCRFGDPETQPIMLRMKSDLVELCLAACESKLDEKTSEWDERASLGVVMAAGGYPGDYRTGDVIHGLPLEEVAGGKVFHAGTKLADDEQVVTNGGRVLCVTALGHTVAEAQKRAYALMTDIHWDDCFCRKDIGWRAIEREQN.

The ATP-grasp domain maps to 109–316; it reads KDFLARHKIP…LVELCLAACE (208 aa). 135 to 196 contributes to the ATP binding site; that stretch reads LREKGAPIVI…EEFLDGEEAS (62 aa). The disordered stretch occupies residues 212–236; that stretch reads SQDHKRVGDKDTGPNTGGMGAYSPA. The span at 213–223 shows a compositional bias: basic and acidic residues; sequence QDHKRVGDKDT. The Mg(2+) site is built by Glu-286 and Asn-288.

Belongs to the GARS family. In terms of assembly, monomer. Mg(2+) serves as cofactor. The cofactor is Mn(2+).

The catalysed reaction is 5-phospho-beta-D-ribosylamine + glycine + ATP = N(1)-(5-phospho-beta-D-ribosyl)glycinamide + ADP + phosphate + H(+). It participates in purine metabolism; IMP biosynthesis via de novo pathway; N(1)-(5-phospho-D-ribosyl)glycinamide from 5-phospho-alpha-D-ribose 1-diphosphate: step 2/2. Catalyzes the reversible conversion of phosphoribosylamine to glycinamide ribonucleotide, an enzymatic step in purine biosynthesis pathway. In Escherichia coli (strain K12), this protein is Phosphoribosylamine--glycine ligase (purD).